Here is a 159-residue protein sequence, read N- to C-terminus: Protein-export protein SecB (159 aa).

This sequence belongs to the SecB family. Homotetramer, a dimer of dimers. One homotetramer interacts with 1 SecA dimer.

Its subcellular location is the cytoplasm. In terms of biological role, one of the proteins required for the normal export of preproteins out of the cell cytoplasm. It is a molecular chaperone that binds to a subset of precursor proteins, maintaining them in a translocation-competent state. It also specifically binds to its receptor SecA. The sequence is that of Protein-export protein SecB from Marinomonas sp. (strain MWYL1).